The following is a 444-amino-acid chain: Glutamate-1-semialdehyde 2,1-aminomutase (444 aa).

An N6-(pyridoxal phosphate)lysine modification is found at Lys-267.

Belongs to the class-III pyridoxal-phosphate-dependent aminotransferase family. HemL subfamily. Homodimer. It depends on pyridoxal 5'-phosphate as a cofactor.

The protein localises to the cytoplasm. It catalyses the reaction (S)-4-amino-5-oxopentanoate = 5-aminolevulinate. The protein operates within porphyrin-containing compound metabolism; protoporphyrin-IX biosynthesis; 5-aminolevulinate from L-glutamyl-tRNA(Glu): step 2/2. The polypeptide is Glutamate-1-semialdehyde 2,1-aminomutase (Xylella fastidiosa (strain Temecula1 / ATCC 700964)).